An 869-amino-acid polypeptide reads, in one-letter code: Sodium-dependent phosphate transporter (869 aa).

Residues methionine 1–glutamate 18 lie on the Extracellular side of the membrane. Residues tyrosine 19–alanine 39 traverse the membrane as a helical segment. The Cytoplasmic segment spans residues asparagine 40–alanine 54. A helical membrane pass occupies residues isoleucine 55 to leucine 75. Topologically, residues glycine 76 to proline 97 are extracellular. The helical transmembrane segment at serine 98–alanine 118 threads the bilayer. Over asparagine 119 to histidine 120 the chain is Cytoplasmic. The chain crosses the membrane as a helical span at residues leucine 121–alanine 141. The Extracellular portion of the chain corresponds to serine 142–alanine 154. A helical membrane pass occupies residues phenylalanine 155–phenylalanine 175. Residues valine 176–leucine 196 are Cytoplasmic-facing. The chain crosses the membrane as a helical span at residues tryptophan 197–phenylalanine 217. Residues glutamate 218–threonine 250 lie on the Extracellular side of the membrane. The helical transmembrane segment at alanine 251–tyrosine 271 threads the bilayer. The Cytoplasmic portion of the chain corresponds to arginine 272 to serine 720. 3 disordered regions span residues lysine 286–leucine 312, alanine 374–valine 401, and serine 453–arginine 571. Over residues serine 457–proline 481 the composition is skewed to low complexity. Residues arginine 482–proline 491 show a composition bias toward pro residues. Residues arginine 492–serine 509 are compositionally biased toward low complexity. Residues proline 556–arginine 571 are compositionally biased toward basic and acidic residues. Residues proline 721 to tyrosine 741 form a helical membrane-spanning segment. Topologically, residues arginine 742 to glycine 759 are extracellular. The chain crosses the membrane as a helical span at residues phenylalanine 760–leucine 780. Topologically, residues serine 781–glycine 837 are cytoplasmic. Residues glycine 838–phenylalanine 858 traverse the membrane as a helical segment. Over serine 859–serine 869 the chain is Extracellular.

The protein belongs to the inorganic phosphate transporter (PiT) (TC 2.A.20) family.

The protein resides in the cell membrane. Its subcellular location is the vacuole membrane. It localises to the cytoplasmic vesicle membrane. It catalyses the reaction 2 Na(+)(out) + phosphate(out) = 2 Na(+)(in) + phosphate(in). Sodium-phosphate symporter which preferentially transports the monovalent form of phosphate with a stoichiometry of two sodium ions per phosphate ion. Plays a role in stabilizing the cytosolic pH and osmoregulation. May be required for optimal virulence of parasites in vivo. The chain is Sodium-dependent phosphate transporter from Toxoplasma gondii (strain ATCC 50861 / VEG).